The sequence spans 365 residues: Chorismate synthase (365 aa).

Arg-47 lines the NADP(+) pocket. FMN contacts are provided by residues 124-126 (RAS), Gly-287, 302-306 (KPTAT), and Arg-328. The tract at residues 266 to 290 (FIKSDDSSKLRTTSNNSGGIQGGIS) is disordered.

Belongs to the chorismate synthase family. As to quaternary structure, homotetramer. Requires FMNH2 as cofactor.

It carries out the reaction 5-O-(1-carboxyvinyl)-3-phosphoshikimate = chorismate + phosphate. It participates in metabolic intermediate biosynthesis; chorismate biosynthesis; chorismate from D-erythrose 4-phosphate and phosphoenolpyruvate: step 7/7. Functionally, catalyzes the anti-1,4-elimination of the C-3 phosphate and the C-6 proR hydrogen from 5-enolpyruvylshikimate-3-phosphate (EPSP) to yield chorismate, which is the branch point compound that serves as the starting substrate for the three terminal pathways of aromatic amino acid biosynthesis. This reaction introduces a second double bond into the aromatic ring system. This Prochlorococcus marinus (strain MIT 9301) protein is Chorismate synthase.